A 684-amino-acid polypeptide reads, in one-letter code: Protein real-time (684 aa).

The PRELI/MSF1 domain maps to 2–178 (VQKYESPVRI…FVNELKQEGI (177 aa)). The CRAL-TRIO domain occupies 297-474 (TPAVVEKYFP…FLGGSCNVID (178 aa)). A GOLD domain is found at 537–684 (HHGLYKAVDL…GFSSNSLQSR (148 aa)).

The protein localises to the mitochondrion. The sequence is that of Protein real-time from Anopheles gambiae (African malaria mosquito).